Reading from the N-terminus, the 204-residue chain is Outer-membrane lipoprotein carrier protein (204 aa).

Residues 1 to 21 (MKKYLNLTALLLVGISNVTWA) form the signal peptide.

It belongs to the LolA family. As to quaternary structure, monomer.

The protein localises to the periplasm. In terms of biological role, participates in the translocation of lipoproteins from the inner membrane to the outer membrane. Only forms a complex with a lipoprotein if the residue after the N-terminal Cys is not an aspartate (The Asp acts as a targeting signal to indicate that the lipoprotein should stay in the inner membrane). This is Outer-membrane lipoprotein carrier protein from Histophilus somni (strain 2336) (Haemophilus somnus).